Here is a 358-residue protein sequence, read N- to C-terminus: Glutamine synthetase (358 aa).

A GS beta-grasp domain is found at 25-104 (VQAEYIWIDA…VLCECYDNDG (80 aa)). The GS catalytic domain maps to 111–358 (YRAHCKKVMD…ILVETTVLNN (248 aa)).

It belongs to the glutamine synthetase family. As to quaternary structure, homooctamer.

Its subcellular location is the cytoplasm. The catalysed reaction is L-glutamate + NH4(+) + ATP = L-glutamine + ADP + phosphate + H(+). The sequence is that of Glutamine synthetase (GLN1) from Cryptococcus neoformans var. neoformans serotype D (strain B-3501A) (Filobasidiella neoformans).